Consider the following 332-residue polypeptide: Twinfilin-1 (332 aa).

Positions 5–132 constitute an ADF-H 1 domain; sequence SGIVAEQALL…VDLKNFDSAR (128 aa). 2 positions are modified to phosphoserine: Ser-167 and Ser-172. Positions 173-300 constitute an ADF-H 2 domain; that stretch reads PLSLTFRVNS…DKSLLMATNK (128 aa). Positions 301 to 332 are disordered; it reads EDSLDHGSNPDLPNKSNLKFNKPKGPLRKRRT. Residues 321 to 332 are compositionally biased toward basic residues; it reads NKPKGPLRKRRT.

This sequence belongs to the actin-binding proteins ADF family. Twinfilin subfamily. Interacts with G-actin; ADP-actin form.

The protein resides in the cytoplasm. It is found in the cytoskeleton. Its function is as follows. Actin-binding protein involved in motile and morphological processes. Inhibits actin polymerization, likely by sequestering G-actin. Prevents actin filament assembly by forming a 1:1 complex with actin monomers, and inhibits the nucleotide exchange reaction of actin monomers. This Saccharomyces cerevisiae (strain ATCC 204508 / S288c) (Baker's yeast) protein is Twinfilin-1 (TWF1).